We begin with the raw amino-acid sequence, 242 residues long: Biosynthetic peptidoglycan transglycosylase (242 aa).

A helical transmembrane segment spans residues I19 to V39.

This sequence belongs to the glycosyltransferase 51 family.

The protein resides in the cell inner membrane. The catalysed reaction is [GlcNAc-(1-&gt;4)-Mur2Ac(oyl-L-Ala-gamma-D-Glu-L-Lys-D-Ala-D-Ala)](n)-di-trans,octa-cis-undecaprenyl diphosphate + beta-D-GlcNAc-(1-&gt;4)-Mur2Ac(oyl-L-Ala-gamma-D-Glu-L-Lys-D-Ala-D-Ala)-di-trans,octa-cis-undecaprenyl diphosphate = [GlcNAc-(1-&gt;4)-Mur2Ac(oyl-L-Ala-gamma-D-Glu-L-Lys-D-Ala-D-Ala)](n+1)-di-trans,octa-cis-undecaprenyl diphosphate + di-trans,octa-cis-undecaprenyl diphosphate + H(+). Its pathway is cell wall biogenesis; peptidoglycan biosynthesis. Functionally, peptidoglycan polymerase that catalyzes glycan chain elongation from lipid-linked precursors. This Salmonella paratyphi A (strain ATCC 9150 / SARB42) protein is Biosynthetic peptidoglycan transglycosylase.